Reading from the N-terminus, the 202-residue chain is Ribonuclease HII (202 aa).

The RNase H type-2 domain maps to glycine 18 to methionine 202. Aspartate 24, glutamate 25, and aspartate 116 together coordinate a divalent metal cation.

Belongs to the RNase HII family. Requires Mn(2+) as cofactor. Mg(2+) is required as a cofactor.

Its subcellular location is the cytoplasm. It catalyses the reaction Endonucleolytic cleavage to 5'-phosphomonoester.. In terms of biological role, endonuclease that specifically degrades the RNA of RNA-DNA hybrids. This chain is Ribonuclease HII, found in Shewanella piezotolerans (strain WP3 / JCM 13877).